A 300-amino-acid polypeptide reads, in one-letter code: Protoheme IX farnesyltransferase (300 aa).

A run of 9 helical transmembrane segments spans residues 31-51 (VMSL…NSLH), 52-72 (PFIS…AGAI), 92-112 (IVRG…MAFF), 123-145 (FLSA…MWLK), 152-172 (IVIG…SVSG), 179-199 (VILF…LALF), 225-245 (ILIY…VGMS), 247-267 (IIYL…SISL), and 280-300 (FFAY…FCRV).

Belongs to the UbiA prenyltransferase family. Protoheme IX farnesyltransferase subfamily.

Its subcellular location is the cell inner membrane. It catalyses the reaction heme b + (2E,6E)-farnesyl diphosphate + H2O = Fe(II)-heme o + diphosphate. It functions in the pathway porphyrin-containing compound metabolism; heme O biosynthesis; heme O from protoheme: step 1/1. Its function is as follows. Converts heme B (protoheme IX) to heme O by substitution of the vinyl group on carbon 2 of heme B porphyrin ring with a hydroxyethyl farnesyl side group. This Rickettsia bellii (strain OSU 85-389) protein is Protoheme IX farnesyltransferase.